The chain runs to 124 residues: Large ribosomal subunit protein uL18 (124 aa).

This sequence belongs to the universal ribosomal protein uL18 family. In terms of assembly, part of the 50S ribosomal subunit; part of the 5S rRNA/L5/L18/L25 subcomplex. Contacts the 5S and 23S rRNAs.

This is one of the proteins that bind and probably mediate the attachment of the 5S RNA into the large ribosomal subunit, where it forms part of the central protuberance. The chain is Large ribosomal subunit protein uL18 from Caldicellulosiruptor saccharolyticus (strain ATCC 43494 / DSM 8903 / Tp8T 6331).